We begin with the raw amino-acid sequence, 217 residues long: MSSDFEGYEQDFAVLTAEITSKIARVPRLPPDEKKQMVANVEKQLEEAKELLEQMDLEVREIPPQSRGMYSNRMRSYKQEMGKLETDFKRSRIAYSDEVRNELLGDDGNSSENQRAHLLDNTERLERSSRRLEAGYQIAVETEQIGQEMLENLSHDREKIQRARERLRETDANLGKSSRILTGMLRRIIQNRILLVILGIIVVITILMAITFSVRRH.

Residues 1–192 (MSSDFEGYEQ…GMLRRIIQNR (192 aa)) are Cytoplasmic-facing. Coiled-coil stretches lie at residues 31–92 (PDEK…KRSR) and 112–178 (ENQR…GKSS). The chain crosses the membrane as a helical span at residues 193–213 (ILLVILGIIVVITILMAITFS). The Extracellular segment spans residues 214–217 (VRRH).

Belongs to the VTI1 family. In terms of assembly, interacts with distinct SNARE complexes that contain either STX5 or STX6. Interacts with NAPA and, to a lesser extent, with NAPG. Identified in a complex containing STX6, STX12, VAMP4 and VTI1A.

It localises to the cytoplasmic vesicle. It is found in the golgi apparatus membrane. Functionally, V-SNARE that mediates vesicle transport pathways through interactions with t-SNAREs on the target membrane. These interactions are proposed to mediate aspects of the specificity of vesicle trafficking and to promote fusion of the lipid bilayers. Involved in vesicular transport from the late endosomes to the trans-Golgi network. Along with VAMP7, involved in an non-conventional RAB1-dependent traffic route to the cell surface used by KCNIP1 and KCND2. May be involved in increased cytokine secretion associated with cellular senescence. The chain is Vesicle transport through interaction with t-SNAREs homolog 1A (VTI1A) from Homo sapiens (Human).